Reading from the N-terminus, the 761-residue chain is Mitochondrial intermediate peptidase (761 aa).

Residues 1-37 (MLIQKILLNKEISRLPRILSILNYTGLRWLSGSSGRN) constitute a mitochondrion transit peptide. Histidine 547 is a binding site for Zn(2+). Glutamate 548 is an active-site residue. Zn(2+) is bound by residues histidine 551 and histidine 554.

Belongs to the peptidase M3 family. Requires Zn(2+) as cofactor.

It localises to the mitochondrion matrix. The catalysed reaction is Release of an N-terminal octapeptide as second stage of processing of some proteins imported into the mitochondrion.. Its function is as follows. Cleaves proteins, imported into the mitochondrion, to their mature size. While most mitochondrial precursor proteins are processed to the mature form in one step by mitochondrial processing peptidase (MPP), the sequential cleavage by MIP of an octapeptide after initial processing by MPP is a required step for a subgroup of nuclear-encoded precursor proteins destined for the matrix or the inner membrane. This chain is Mitochondrial intermediate peptidase (OCT1), found in Candida glabrata (strain ATCC 2001 / BCRC 20586 / JCM 3761 / NBRC 0622 / NRRL Y-65 / CBS 138) (Yeast).